We begin with the raw amino-acid sequence, 438 residues long: Glutamine synthetase (438 aa).

The GS beta-grasp domain maps to 14-98; that stretch reads EEVEYVDIRF…VHCNVVEPDT (85 aa). The GS catalytic domain maps to 106 to 438; sequence PRIALKAEAY…LAGDVFTKDQ (333 aa). Mg(2+) contacts are provided by glutamate 130 and glutamate 132. Aspartate 208 is an ATP binding site. Glutamate 213 and glutamate 220 together coordinate Mg(2+). Residues 264–265 and glycine 265 contribute to the L-glutamate site; that span reads NG. Histidine 269 is a binding site for Mg(2+). Residues 271-273 and serine 273 contribute to the ATP site; that span reads NMS. Residues arginine 321, glutamate 327, and arginine 339 each coordinate L-glutamate. Positions 339, 344, and 352 each coordinate ATP. A Mg(2+)-binding site is contributed by glutamate 357. Residue arginine 359 participates in L-glutamate binding. Tyrosine 397 bears the O-AMP-tyrosine mark.

It belongs to the glutamine synthetase family. As to quaternary structure, oligomer of 12 subunits arranged in the form of two hexameric ring. Mg(2+) serves as cofactor.

Its subcellular location is the cytoplasm. It catalyses the reaction L-glutamate + NH4(+) + ATP = L-glutamine + ADP + phosphate + H(+). With respect to regulation, the activity of this enzyme could be controlled by adenylation under conditions of abundant glutamine. In terms of biological role, catalyzes the ATP-dependent biosynthesis of glutamine from glutamate and ammonia. This Rhodobacter capsulatus (Rhodopseudomonas capsulata) protein is Glutamine synthetase.